A 148-amino-acid chain; its full sequence is Protein GLUTAMINE DUMPER 3 (148 aa).

Residues 1–24 (MEGRQYYPPRENVEGNRTTMGGGP) form a disordered region. Over 1–34 (MEGRQYYPPRENVEGNRTTMGGGPHSPWHSPVPY) the chain is Extracellular. Residues 35–55 (LFGGLAAMLGLIAFALLILAC) form a helical membrane-spanning segment. Residues 56–148 (SYWRLSGYLD…RSSESNGETH (93 aa)) are Cytoplasmic-facing. The VIMAG signature appears at 99-103 (VIMAG). Positions 120–132 (CDDDDDEDDDVEG) are enriched in acidic residues. The disordered stretch occupies residues 120–148 (CDDDDDEDDDVEGSDQVVPRSSESNGETH). A compositionally biased stretch (polar residues) spans 138–148 (PRSSESNGETH).

Belongs to the GLUTAMINE DUMPER 1 (TC 9.B.60) family. Expressed in the vascular tissues. Also detected in anthers.

Its subcellular location is the membrane. Probable subunit of an amino acid transporter involved in the regulation of the amino acid metabolism. Stimulates amino acid export by activating nonselective amino acid facilitators. Acts upstream genes involved in the salicylic acid (SA) pathway and in the geminivirus-host interaction. The chain is Protein GLUTAMINE DUMPER 3 (GDU3) from Arabidopsis thaliana (Mouse-ear cress).